Here is a 130-residue protein sequence, read N- to C-terminus: Small ribosomal subunit protein uS8 (130 aa).

It belongs to the universal ribosomal protein uS8 family. As to quaternary structure, part of the 30S ribosomal subunit. Contacts proteins S5 and S12.

Its function is as follows. One of the primary rRNA binding proteins, it binds directly to 16S rRNA central domain where it helps coordinate assembly of the platform of the 30S subunit. The chain is Small ribosomal subunit protein uS8 from Aeromonas hydrophila subsp. hydrophila (strain ATCC 7966 / DSM 30187 / BCRC 13018 / CCUG 14551 / JCM 1027 / KCTC 2358 / NCIMB 9240 / NCTC 8049).